The sequence spans 156 residues: MPRRRVAAKREILDDPKYGSQILAKFMNHVMESGKKAVAERIVYGALDTVKARKNSDPLEIFEKALDAIAPLVEVKSRRVGGATYQVPVEVRPSRRNALAMRWLVDYARKRGEKSMALRLAGELLDAAEGKGAAVKKREDVHRMAEANKAFSHYRF.

This sequence belongs to the universal ribosomal protein uS7 family. In terms of assembly, part of the 30S ribosomal subunit. Contacts proteins S9 and S11.

Its function is as follows. One of the primary rRNA binding proteins, it binds directly to 16S rRNA where it nucleates assembly of the head domain of the 30S subunit. Is located at the subunit interface close to the decoding center, probably blocks exit of the E-site tRNA. In Pseudomonas entomophila (strain L48), this protein is Small ribosomal subunit protein uS7.